The primary structure comprises 480 residues: Ribosomal RNA small subunit methyltransferase F (480 aa).

S-adenosyl-L-methionine contacts are provided by residues A125–K131, E149, D176, and D194. C247 functions as the Nucleophile in the catalytic mechanism.

It belongs to the class I-like SAM-binding methyltransferase superfamily. RsmB/NOP family.

It is found in the cytoplasm. The enzyme catalyses cytidine(1407) in 16S rRNA + S-adenosyl-L-methionine = 5-methylcytidine(1407) in 16S rRNA + S-adenosyl-L-homocysteine + H(+). Its function is as follows. Specifically methylates the cytosine at position 1407 (m5C1407) of 16S rRNA. The chain is Ribosomal RNA small subunit methyltransferase F from Enterobacter sp. (strain 638).